The following is a 214-amino-acid chain: NKG2-D type II integral membrane protein (214 aa).

Residues 1 to 56 (MGWIRDRRSPSSMEIRELHNRDVINRGAFKSRQKRTQTLITSKCGENPSPFFLARS) lie on the Cytoplasmic side of the membrane. The helical; Signal-anchor for type II membrane protein transmembrane segment at 57–77 (IAIAMGIRFIVMVMIYSGMII) threads the bilayer. The Extracellular segment spans residues 78 to 214 (NLLFNQEAPS…NTYICMKRTV (137 aa)). Disulfide bonds link Cys94–Cys103 and Cys97–Cys108. In terms of domain architecture, C-type lectin spans 98–210 (PKNWICYRNS…CLTLNTYICM (113 aa)). Asn113, Asn129, Asn161, and Asn184 each carry an N-linked (GlcNAc...) asparagine glycan. Cystine bridges form between Cys125–Cys209 and Cys187–Cys201.

Homodimer; disulfide-linked. Heterohexamer composed of two subunits of KLRK1 and four subunits of HCST/DAP10. Interacts (via transmembrane domain) with HCST/DAP10 (via transmembrane domain); the interaction is required for KLRK1 NK cell surface and induces NK cell-mediated cytotoxicity. Can form disulfide-bonded heterodimer with CD94. Interacts with CEACAM1; recruits PTPN6 that dephosphorylates VAV1. In terms of tissue distribution, detected in peripheral blood leukocytes, macrophages, monocytes and natural killer cells.

It localises to the cell membrane. Functions as an activating and costimulatory receptor involved in immunosurveillance upon binding to various cellular stress-inducible ligands displayed at the surface of autologous tumor cells and virus-infected cells. Provides both stimulatory and costimulatory innate immune responses on activated killer (NK) cells, leading to cytotoxic activity. Acts as a costimulatory receptor for T-cell receptor (TCR) in CD8(+) T-cell-mediated adaptive immune responses by amplifying T-cell activation. Stimulates perforin-mediated elimination of ligand-expressing tumor cells. Signaling involves calcium influx, culminating in the expression of TNF-alpha. Participates in NK cell-mediated bone marrow graft rejection. May play a regulatory role in differentiation and survival of NK cells. Binds to ligands belonging to various subfamilies of MHC class I-related glycoproteins. The polypeptide is NKG2-D type II integral membrane protein (KLRK1) (Sus scrofa (Pig)).